The sequence spans 142 residues: Transcriptional regulator MraZ (142 aa).

2 consecutive SpoVT-AbrB domains span residues 5-51 (ASSL…PRTE) and 77-120 (AMDV…DKAT).

This sequence belongs to the MraZ family. Forms oligomers.

The protein localises to the cytoplasm. It is found in the nucleoid. The protein is Transcriptional regulator MraZ of Delftia acidovorans (strain DSM 14801 / SPH-1).